We begin with the raw amino-acid sequence, 258 residues long: Nuclear egress protein 2 (258 aa).

At 1 to 228 (MLKEKMYDEL…TVPIFARRNN (228 aa)) the chain is on the perinuclear space side. The chain crosses the membrane as a helical span at residues 229–249 (ILCGFLVAALLIVCYVIFKEF). Residues 250 to 258 (ALSADFSAV) lie on the Nuclear side of the membrane.

The protein belongs to the herpesviridae NEC2 protein family. As to quaternary structure, forms a heterohexameric complex with NEC1. Post-translationally, phosphorylated.

The protein resides in the host nucleus inner membrane. Its function is as follows. Plays an essential role in virion nuclear egress, the first step of virion release from infected cell. Within the host nucleus, NEC1 interacts with the newly formed capsid through the vertexes and directs it to the inner nuclear membrane by associating with NEC2. Induces the budding of the capsid at the inner nuclear membrane as well as its envelopment into the perinuclear space. There, the NEC1/NEC2 complex promotes the fusion of the enveloped capsid with the outer nuclear membrane and the subsequent release of the viral capsid into the cytoplasm where it will reach the secondary budding sites in the host Golgi or trans-Golgi network. The polypeptide is Nuclear egress protein 2 (Homo sapiens (Human)).